A 258-amino-acid chain; its full sequence is Homeobox protein VENTX (258 aa).

Over residues 1–32 (MRLSSSPPRGPQQLSSFGSVDWLSQSSCSGPT) the composition is skewed to polar residues. 2 disordered regions span residues 1 to 93 (MRLS…RAPR) and 227 to 248 (SHPP…PRGL). Positions 91-150 (APRVRTAFTMEQVRTLEGVFQHHQYLSPLERKRLAREMQLSEVQIKTWFQNRRMKHKRQM) form a DNA-binding region, homeobox.

In terms of tissue distribution, expressed in bone marrow of patients recovering from chemotherapy. Also expressed in an erythroleukemia cell line.

Its subcellular location is the nucleus. May be involved in ventralization. The protein is Homeobox protein VENTX (VENTX) of Homo sapiens (Human).